The primary structure comprises 381 residues: 3-dehydroquinate synthase (381 aa).

Residues 81–86 (EGEVSK), 115–119 (GVVGD), 139–140 (TS), lysine 152, and lysine 161 contribute to the NAD(+) site. Zn(2+) is bound by residues glutamate 194, histidine 256, and histidine 274.

The protein belongs to the sugar phosphate cyclases superfamily. Dehydroquinate synthase family. Requires Co(2+) as cofactor. The cofactor is Zn(2+). NAD(+) is required as a cofactor.

It is found in the cytoplasm. It catalyses the reaction 7-phospho-2-dehydro-3-deoxy-D-arabino-heptonate = 3-dehydroquinate + phosphate. It functions in the pathway metabolic intermediate biosynthesis; chorismate biosynthesis; chorismate from D-erythrose 4-phosphate and phosphoenolpyruvate: step 2/7. Functionally, catalyzes the conversion of 3-deoxy-D-arabino-heptulosonate 7-phosphate (DAHP) to dehydroquinate (DHQ). This Rhodopseudomonas palustris (strain BisA53) protein is 3-dehydroquinate synthase.